The following is a 178-amino-acid chain: Glucagon-2 (178 aa).

Residues 1-21 form the signal peptide; the sequence is MFGIHSLAGVLLLVIVQSQLA. Propeptides lie at residues 83–87, 123–134, and 171–178; these read SGAPS, ESAEESMNGPMS, and SNKRQEDH.

Belongs to the glucagon family.

It localises to the secreted. Its function is as follows. Promotes hydrolysis of glycogen and lipids, and raises the blood sugar level. The polypeptide is Glucagon-2 (gcg2) (Oncorhynchus mykiss (Rainbow trout)).